Consider the following 688-residue polypeptide: Glycine--tRNA ligase beta subunit (688 aa).

Belongs to the class-II aminoacyl-tRNA synthetase family. In terms of assembly, tetramer of two alpha and two beta subunits.

It localises to the cytoplasm. The enzyme catalyses tRNA(Gly) + glycine + ATP = glycyl-tRNA(Gly) + AMP + diphosphate. This Histophilus somni (strain 2336) (Haemophilus somnus) protein is Glycine--tRNA ligase beta subunit.